The primary structure comprises 346 residues: Heat-inducible transcription repressor HrcA (346 aa).

The protein belongs to the HrcA family.

Negative regulator of class I heat shock genes (grpE-dnaK-dnaJ and groELS operons). Prevents heat-shock induction of these operons. The sequence is that of Heat-inducible transcription repressor HrcA from Kineococcus radiotolerans (strain ATCC BAA-149 / DSM 14245 / SRS30216).